The primary structure comprises 188 residues: Large ribosomal subunit protein eL18 (188 aa).

Positions 153–188 are disordered; the sequence is GKAPGTPHSHTKPYIRSKGRKFERARGRRASRGYKN. Basic residues-rich tracts occupy residues 161-171 and 178-188; these read SHTKPYIRSKG and RGRRASRGYKN.

The protein belongs to the eukaryotic ribosomal protein eL18 family. Component of the large ribosomal subunit.

It localises to the cytoplasm. The protein resides in the cytosol. Its subcellular location is the rough endoplasmic reticulum. Component of the large ribosomal subunit. The ribosome is a large ribonucleoprotein complex responsible for the synthesis of proteins in the cell. This chain is Large ribosomal subunit protein eL18 (rpl18), found in Ictalurus punctatus (Channel catfish).